A 373-amino-acid chain; its full sequence is D-amino-acid oxidase 3 (373 aa).

The N-terminal stretch at 1–19 is a signal peptide; sequence MVKYDAVILGSGVLGLSIA. Residues S11, L14, D35, A46, S47, G51, and N53 each coordinate FAD. F57 contacts anthranilate. N180 carries an N-linked (GlcNAc...) asparagine glycan. An intrachain disulfide couples C214 to C271. Anthranilate contacts are provided by Y229, Y246, and R296. 3 residues coordinate (R)-lactate: Y229, Y246, and R296. Residues R296, G342, G345, Y346, and Q347 each coordinate FAD. Residues 371 to 373 carry the Microbody targeting signal motif; sequence AKL.

Belongs to the DAMOX/DASOX family. It depends on FAD as a cofactor.

It is found in the peroxisome matrix. The enzyme catalyses a D-alpha-amino acid + O2 + H2O = a 2-oxocarboxylate + H2O2 + NH4(+). In terms of biological role, catalyzes the oxidative deamination of D-amino acids with broad substrate specificity. Enables the organism to utilize D-amino acids as a source of nutrients. Enables the organism to utilize D-glutamate and D-methionine as a nitrogen source. Protects the organism from the toxicity of D-amino acids, including from D-glutamate. May play a role in its interaction with the host. This Cryptococcus neoformans var. grubii serotype A (strain H99 / ATCC 208821 / CBS 10515 / FGSC 9487) (Filobasidiella neoformans var. grubii) protein is D-amino-acid oxidase 3.